Here is a 463-residue protein sequence, read N- to C-terminus: tRNA modification GTPase MnmE (463 aa).

(6S)-5-formyl-5,6,7,8-tetrahydrofolate contacts are provided by R29, E91, and R130. The TrmE-type G domain maps to 225 to 384 (GLKVAIVGRP…LETAILEIVQ (160 aa)). N235 serves as a coordination point for K(+). GTP is bound by residues 235 to 240 (NVGKSS), 254 to 260 (TDLPGTT), and 279 to 282 (DTAG). S239 lines the Mg(2+) pocket. 3 residues coordinate K(+): T254, L256, and T259. T260 is a Mg(2+) binding site. Position 463 (K463) interacts with (6S)-5-formyl-5,6,7,8-tetrahydrofolate.

It belongs to the TRAFAC class TrmE-Era-EngA-EngB-Septin-like GTPase superfamily. TrmE GTPase family. As to quaternary structure, homodimer. Heterotetramer of two MnmE and two MnmG subunits. The cofactor is K(+).

The protein localises to the cytoplasm. In terms of biological role, exhibits a very high intrinsic GTPase hydrolysis rate. Involved in the addition of a carboxymethylaminomethyl (cmnm) group at the wobble position (U34) of certain tRNAs, forming tRNA-cmnm(5)s(2)U34. This chain is tRNA modification GTPase MnmE, found in Trichormus variabilis (strain ATCC 29413 / PCC 7937) (Anabaena variabilis).